The primary structure comprises 211 residues: MDFHRALSALFTNQAAVQPLLGSLGFPFNDGTSILTTALAAQSGGKKLDTPLGILPFDSLPTTNLLTPTKKIKLEDELCASPVSSRSSTVSSSHFSSPQRSPSRKMSVPIPEEKKDSAYFERRRKNNDAAKRSRDARRQKEEQIASKAHALERENMQLRGKVSSLEQEAAQLRFLLFSKISPANSEVSCESNDSTETNDSNDSKSDSTIEV.

Positions Val-83–Ser-101 are enriched in low complexity. 2 disordered regions span residues Val-83–Glu-152 and Asn-184–Val-211. The span at Pro-111–Glu-152 shows a compositional bias: basic and acidic residues. Positions Asp-116–Lys-179 constitute a bZIP domain. The basic motif stretch occupies residues Arg-122–Lys-140. The tract at residues Ile-144–Leu-172 is leucine-zipper. Residues Glu-190–Ser-200 are compositionally biased toward low complexity. Over residues Asn-201–Val-211 the composition is skewed to basic and acidic residues.

It belongs to the bZIP family. Interacts with NFIL3 transcription factor homolog atf-2.

It is found in the nucleus. In terms of biological role, transcription factor. Required to activate programmed cell death in the sister cells of the serotoninergic neurosecretory motor (NSM) neurons. Negatively regulates the activity of ces-1 which in turn negatively regulates the activities of cell-killing genes. Binds to the DNA sequence 5'-RTTACGTAAY-3'. Involved in the development of the excretory duct cell, by positively modulating embryonic transcription of putative transcription factor lin-48, acting in concert with NFIL3 transcription factor homolog atf-2. Positively modulates expression of neuropeptide pigment dispersing factor homologs pdf-1 and pdf-2. The polypeptide is Transcription factor ces-2 (ces-2) (Caenorhabditis elegans).